Reading from the N-terminus, the 194-residue chain is MSPFSIVLIGFAMSTDAFAAAIGKGAAMRKPQWRDALRAGLIFGCIEAITPVIGWVLGRAASSYLSAYDHWIAFVLLGALGTHMMIAGLRNGPDDANDAEAKTPKRHGLLGLATTGFATSIDAMAVGVSLAFLDVHIGVVAVVVGLCTFSMVTAGVMLGRALGNLIGKRAEILGGLILVIVGSVILYEHLGAAT.

6 helical membrane-spanning segments follow: residues 3 to 23, 37 to 57, 69 to 89, 110 to 132, 147 to 167, and 172 to 192; these read PFSI…AAIG, LRAG…GWVL, DHWI…IAGL, LGLA…SLAF, CTFS…NLIG, and ILGG…HLGA.

The protein belongs to the MntP (TC 9.B.29) family.

It localises to the cell inner membrane. Probably functions as a manganese efflux pump. The protein is Putative manganese efflux pump MntP of Xanthomonas oryzae pv. oryzae (strain MAFF 311018).